The sequence spans 722 residues: Polyribonucleotide nucleotidyltransferase (722 aa).

The Mg(2+) site is built by D486 and D492. A KH domain is found at 553 to 612; it reads PKIVQLQIDIDKISLVIGSTGKTVKAITDEFEVKVQIEQNGKIILFGDDDFKMQKAKERI. The S1 motif domain occupies 622 to 717; it reads GEIYEGTVKK…KFGKIDLEIV (96 aa).

The protein belongs to the polyribonucleotide nucleotidyltransferase family. Mg(2+) is required as a cofactor.

It localises to the cytoplasm. The enzyme catalyses RNA(n+1) + phosphate = RNA(n) + a ribonucleoside 5'-diphosphate. Involved in mRNA degradation. Catalyzes the phosphorolysis of single-stranded polyribonucleotides processively in the 3'- to 5'-direction. The chain is Polyribonucleotide nucleotidyltransferase from Borreliella burgdorferi (strain ZS7) (Borrelia burgdorferi).